Consider the following 454-residue polypeptide: Golgi reassembly-stacking protein 2 (454 aa).

A lipid anchor (N-myristoyl glycine) is attached at glycine 2. PDZ GRASP-type domains follow at residues 15–105 (EGYH…FCSF) and 111–199 (NVWH…YGYL). Residues 15–215 (EGYHVLRVQE…PFEEGKKISL (201 aa)) form a GRASP region. A dimethylated arginine mark is found at arginine 30 and arginine 47. The tract at residues 194–199 (IGYGYL) is important for membrane binding. Phosphoserine is present on serine 214. Threonine 222 carries the post-translational modification Phosphothreonine. Position 225 is a phosphothreonine; by MAPK (threonine 225). The segment at 377 to 454 (EGSSAASAGE…VTDANASGAS (78 aa)) is disordered. Residue serine 411 is modified to Phosphoserine. Threonine 435 is modified (phosphothreonine). A phosphoserine mark is found at serine 443 and serine 451.

This sequence belongs to the GORASP family. In terms of assembly, homodimer. Homooligomer. ER stress induces phosphorylation-dependent monomerization. Interacts with BLZF1/Golgin 45. Identified in a complex with RAB2 and GORASP2. Interacts with JAM2 and JAM3. Interacts with members of the p24 cargo receptors. Interacts with CNIH1 and the cytoplasmic domain of transmembrane TGFA, prior its transit in the trans-Golgi. Interacts with KCTD5. Interacts with TMED2 and TMED3. Interacts with SEC16A in response to ER stress. Interacts (via PDZ GRASP-type 1 domain) with core-glycosylated CFTR in response to ER stress. In terms of processing, myristoylated. Myristoylation is essential for the Golgi targeting. Palmitoylated. Post-translationally, phosphorylated in mitotic cells. ER stress-induced phosphorylation at Ser-443 induces monomerization and subsequent relocalization from Golgi to ER which is essential for mediating unconventional (ER/Golgi-independent) trafficking of CFTR to the cell membrane. As to expression, detected in lung, brain, heart, liver and testis.

Its subcellular location is the golgi apparatus membrane. It is found in the endoplasmic reticulum membrane. The protein localises to the golgi apparatus. Key structural protein of the Golgi apparatus. The membrane cisternae of the Golgi apparatus adhere to each other to form stacks, which are aligned side by side to form the Golgi ribbon. Acting in concert with GORASP1/GRASP65, is required for the formation and maintenance of the Golgi ribbon, and may be dispensable for the formation of stacks. However, other studies suggest that GORASP2 plays a role in the assembly and membrane stacking of the Golgi cisternae, and in the process by which Golgi stacks reform after breakdown during mitosis and meiosis. May regulate the intracellular transport and presentation of a defined set of transmembrane proteins, such as transmembrane TGFA. Required for normal acrosome formation during spermiogenesis and normal male fertility, probably by promoting colocalization of JAM2 and JAM3 at contact sites between germ cells and Sertoli cells. Mediates ER stress-induced unconventional (ER/Golgi-independent) trafficking of core-glycosylated CFTR to cell membrane. In Rattus norvegicus (Rat), this protein is Golgi reassembly-stacking protein 2 (Gorasp2).